Here is a 157-residue protein sequence, read N- to C-terminus: MSRKNKKIKKKVFVDTRYNSRIVAKFANRMMYDGKKSISESILYSSIDLLADKLEESDKMAVFYKALDNIKPLVEVRSRRVGGATYQVPVEVREERREALAMKWIIFAARKSSGRSMKEKLSNELLNAYNSTGAAFKKKEDTHRMAEANKAFTHYRW.

This sequence belongs to the universal ribosomal protein uS7 family. Part of the 30S ribosomal subunit. Contacts proteins S9 and S11.

Functionally, one of the primary rRNA binding proteins, it binds directly to 16S rRNA where it nucleates assembly of the head domain of the 30S subunit. Is located at the subunit interface close to the decoding center, probably blocks exit of the E-site tRNA. The sequence is that of Small ribosomal subunit protein uS7 from Borreliella burgdorferi (strain ATCC 35210 / DSM 4680 / CIP 102532 / B31) (Borrelia burgdorferi).